Reading from the N-terminus, the 747-residue chain is Cysteine--tRNA ligase, cytoplasmic (747 aa).

The tract at residues Met1 to Gln25 is disordered. The segment covering Pro15–Gln25 has biased composition (polar residues). Residue Cys54 participates in Zn(2+) binding. Gly55 is a binding site for L-cysteine. The short motif at Pro56–His66 is the 'HIGH' region element. Thr95 is a binding site for L-cysteine. Residues Lys100 to Lys103 carry the 'KIIK' region motif. Zn(2+) is bound by residues Cys347, His372, and Glu376. His372 lines the L-cysteine pocket. The 'KMSKS' region signature appears at Lys405 to Ser409. Lys408 contributes to the ATP binding site. The segment covering Glu651–Lys683 has biased composition (basic and acidic residues). The interval Glu651–Lys722 is disordered.

It belongs to the class-I aminoacyl-tRNA synthetase family. As to quaternary structure, homodimer. Requires Zn(2+) as cofactor.

It is found in the cytoplasm. It catalyses the reaction tRNA(Cys) + L-cysteine + ATP = L-cysteinyl-tRNA(Cys) + AMP + diphosphate. Its function is as follows. Catalyzes the ATP-dependent ligation of cysteine to tRNA(Cys). The protein is Cysteine--tRNA ligase, cytoplasmic (cars1) of Xenopus tropicalis (Western clawed frog).